A 422-amino-acid chain; its full sequence is MDKIVIDGGVPLRGSVATSGAKNAALPIIAGALLAEGDHLVRNVPDLADVRTLGRLLVHMGCQAERNAGEKGALWIRVPAAVQPEAPYELVKTMRASVVVLGPLVARWGKARVSLPGGCAIGARPIDQHLKGLSALGAEIRLEHGYVEATAPRGRLRGATFTFDAQTVTGTENVMMAAALAEGETLLRNCAREPEIVDLAAALVRMGARISGAGADEIRIEGVETLRPLDHVVIADRIEAGTFLAAGALPGNDVTVQGCVLEHVEALVEKLRAAGAEVLPVDGGLRVVGDGRPRPVDVRTAPHPGFPTDMQAQMMALLCLADGSSKITETVFENRFMHVQELQRLGAEIAVDGKTAVVKGVPELSGAPVMASDLRASAALVLAGLAAQGTTEVHRVYHLDRGYERIEEKLAPLGARIRREKA.

A phosphoenolpyruvate-binding site is contributed by 22 to 23 (KN). Arginine 95 serves as a coordination point for UDP-N-acetyl-alpha-D-glucosamine. Cysteine 119 acts as the Proton donor in catalysis. Cysteine 119 carries the 2-(S-cysteinyl)pyruvic acid O-phosphothioketal modification. UDP-N-acetyl-alpha-D-glucosamine is bound by residues 124–128 (RPIDQ), aspartate 309, and valine 331.

Belongs to the EPSP synthase family. MurA subfamily.

Its subcellular location is the cytoplasm. It carries out the reaction phosphoenolpyruvate + UDP-N-acetyl-alpha-D-glucosamine = UDP-N-acetyl-3-O-(1-carboxyvinyl)-alpha-D-glucosamine + phosphate. It functions in the pathway cell wall biogenesis; peptidoglycan biosynthesis. Its function is as follows. Cell wall formation. Adds enolpyruvyl to UDP-N-acetylglucosamine. This chain is UDP-N-acetylglucosamine 1-carboxyvinyltransferase, found in Anaeromyxobacter sp. (strain Fw109-5).